We begin with the raw amino-acid sequence, 351 residues long: Probable V-type proton ATPase subunit d (351 aa).

This sequence belongs to the V-ATPase V0D/AC39 subunit family. In terms of assembly, V-ATPase is a heteromultimeric enzyme composed of a peripheral catalytic V1 complex (components A to H) attached to an integral membrane V0 proton pore complex (components: a, c, c', c'' and d).

In terms of biological role, subunit of the integral membrane V0 complex of vacuolar ATPase. Vacuolar ATPase is responsible for acidifying a variety of intracellular compartments in eukaryotic cells, thus providing most of the energy required for transport processes in the vacuolar system. The sequence is that of Probable V-type proton ATPase subunit d from Oryza sativa subsp. japonica (Rice).